A 486-amino-acid polypeptide reads, in one-letter code: 2-hydroxymuconic semialdehyde dehydrogenase (486 aa).

Active-site residues include glutamate 254 and cysteine 288.

It belongs to the aldehyde dehydrogenase family.

It catalyses the reaction (2Z,4E)-2-hydroxy-6-oxohexa-2,4-dienoate + NAD(+) + H2O = (2Z,4E)-2-hydroxyhexa-2,4-dienedioate + NADH + 2 H(+). It participates in aromatic compound metabolism; benzoate degradation via hydroxylation. Functionally, 2-hydroxymuconic acid semialdehyde can be converted to 2-hydroxypent-2,4-dienoate either directly by the action of 2-hydroxymuconic semialdehyde hydrolase (HMSH) or by the action of three sequential enzymes, the first of which is HMSD. This is 2-hydroxymuconic semialdehyde dehydrogenase (dmpC) from Pseudomonas sp. (strain CF600).